Here is a 135-residue protein sequence, read N- to C-terminus: Large ribosomal subunit protein eL32 (135 aa).

Residue K9 forms a Glycyl lysine isopeptide (Lys-Gly) (interchain with G-Cter in SUMO2) linkage. Position 50 is an N6-succinyllysine (K50). S62 bears the Phosphoserine mark.

This sequence belongs to the eukaryotic ribosomal protein eL32 family. Component of the large ribosomal subunit.

The protein resides in the cytoplasm. Component of the large ribosomal subunit. The ribosome is a large ribonucleoprotein complex responsible for the synthesis of proteins in the cell. This is Large ribosomal subunit protein eL32 (RPL32) from Oryctolagus cuniculus (Rabbit).